Here is a 151-residue protein sequence, read N- to C-terminus: Ubiquitin-conjugating enzyme E2 2 (151 aa).

The segment at 1 to 26 is disordered; it reads MSTSARRRLMRDFKRMQTDPPAGVSA. Positions 4–150 constitute a UBC core domain; sequence SARRRLMRDF…VRETVEKSWE (147 aa). Residue cysteine 88 is the Glycyl thioester intermediate of the active site.

Belongs to the ubiquitin-conjugating enzyme family.

Its subcellular location is the cytoplasm. The protein resides in the nucleus. The catalysed reaction is S-ubiquitinyl-[E1 ubiquitin-activating enzyme]-L-cysteine + [E2 ubiquitin-conjugating enzyme]-L-cysteine = [E1 ubiquitin-activating enzyme]-L-cysteine + S-ubiquitinyl-[E2 ubiquitin-conjugating enzyme]-L-cysteine.. The protein operates within protein modification; protein ubiquitination. Its function is as follows. Catalyzes the covalent attachment of ubiquitin to other proteins. Plays a role in transcription regulation by catalyzing the monoubiquitination of histone H2B to form H2BK123ub1. H2BK123ub1 gives a specific tag for epigenetic transcriptional activation and is also a prerequisite for H3K4me and H3K79me formation. Also involved in postreplication repair of UV-damaged DNA, in N-end rule-dependent protein degradation and in sporulation. The protein is Ubiquitin-conjugating enzyme E2 2 (ubc2) of Aspergillus fumigatus (strain ATCC MYA-4609 / CBS 101355 / FGSC A1100 / Af293) (Neosartorya fumigata).